The chain runs to 107 residues: MAFGDYPAEYNPKVHGPYDPARFYGKADVPFGQVKLGEIGAWLGRRNKTPNAVAGAVSRAWWRWQHKYVFPKRAGIAPFFQLTVASMTFFYLINYTKLKHHRNYKYH.

The protein belongs to the ATPase F chain family. F-type ATPases have 2 components, CF(1) - the catalytic core - and CF(0) - the membrane proton channel. CF(0) seems to have nine subunits: a, b, c, d, e, f, g, F6 and 8 (or A6L).

Its subcellular location is the mitochondrion membrane. Its function is as follows. Mitochondrial membrane ATP synthase (F(1)F(0) ATP synthase or Complex V) produces ATP from ADP in the presence of a proton gradient across the membrane which is generated by electron transport complexes of the respiratory chain. F-type ATPases consist of two structural domains, F(1) - containing the extramembraneous catalytic core and F(0) - containing the membrane proton channel, linked together by a central stalk and a peripheral stalk. During catalysis, ATP synthesis in the catalytic domain of F(1) is coupled via a rotary mechanism of the central stalk subunits to proton translocation. Part of the complex F(0) domain. Minor subunit located with subunit a in the membrane. This is Putative ATP synthase subunit f, mitochondrial from Drosophila melanogaster (Fruit fly).